The primary structure comprises 97 residues: Small integral membrane protein 8 (97 aa).

Positions 1–24 are disordered; sequence MSSAPEPPTFKKEPPKEKDFQSPG. Residues 9-20 show a composition bias toward basic and acidic residues; the sequence is TFKKEPPKEKDF. A helical membrane pass occupies residues 48–67; sequence PVMAFGLVTLSLCVAYIGYL.

This sequence belongs to the SMIM8 family.

The protein localises to the membrane. In Pongo abelii (Sumatran orangutan), this protein is Small integral membrane protein 8 (SMIM8).